The sequence spans 493 residues: Insulinoma-associated protein 2 (493 aa).

Positions Met1–Arg12 are enriched in basic residues. Residues Met1–Arg20 are SNAG domain. Positions Met1–Gly77 are disordered. Residues Phe203 to Cys223 form a C2H2-type 1; atypical zinc finger. The segment at Tyr231 to His253 adopts a C2H2-type 2 zinc-finger fold. Positions Ser248–Ala310 are disordered. Residues Pro267–Pro276 are compositionally biased toward pro residues. Basic and acidic residues predominate over residues Glu283–His294. 3 consecutive C2H2-type zinc fingers follow at residues Phe354–His376, Phe398–His420, and Phe452–His475.

As to expression, expressed in spleen, stomach, liver, kidney and testis. In the pancreas, expressed in islet cells, including insulin-producing beta-cells, but not in acinar cells (at protein level). In the brain, expressed in the neuronal cells of the cerebral cortex, the Purkinje cells of the cerebellum and the hippocampal region including CA1 and CA3 (at protein level).

Its subcellular location is the cytoplasm. It is found in the nucleus. In terms of biological role, may function as a growth suppressor or tumor suppressor in liver cells and in certain neurons. In Mus musculus (Mouse), this protein is Insulinoma-associated protein 2 (Insm2).